Consider the following 127-residue polypeptide: V-type proton ATPase subunit F (127 aa).

It belongs to the V-ATPase F subunit family. As to quaternary structure, V-ATPase is a heteromultimeric enzyme made up of two complexes: the ATP-hydrolytic V1 complex and the proton translocation V0 complex. The V1 complex consists of three catalytic AB heterodimers that form a heterohexamer, three peripheral stalks each consisting of EG heterodimers, one central rotor including subunits D and F, and the regulatory subunits C and H. The proton translocation complex V0 consists of the proton transport subunit a, a ring of proteolipid subunits c9c'', rotary subunit d, subunits e and f, and the accessory subunits VhaAC45 and ATP6AP2.

Its function is as follows. Subunit of the V1 complex of vacuolar(H+)-ATPase (V-ATPase), a multisubunit enzyme composed of a peripheral complex (V1) that hydrolyzes ATP and a membrane integral complex (V0) that translocates protons. V-ATPase is responsible for acidifying and maintaining the pH of intracellular compartments and in some cell types, is targeted to the plasma membrane, where it is responsible for acidifying the extracellular environment. This Anopheles gambiae (African malaria mosquito) protein is V-type proton ATPase subunit F (Vha14).